The sequence spans 469 residues: Serine/threonine-protein kinase orb6 (469 aa).

The region spanning 93–392 (FSTIKVIGKG…AIEIMQHPFF (300 aa)) is the Protein kinase domain. ATP contacts are provided by residues 99-107 (IGKGAFGEV) and lysine 122. The active-site Proton acceptor is the aspartate 216. Residues 393-467 (TGIDWDHIRE…KKFNYLTMKG (75 aa)) form the AGC-kinase C-terminal domain.

The protein belongs to the protein kinase superfamily. Ser/Thr protein kinase family. As to quaternary structure, interacts with mob2.

The enzyme catalyses L-seryl-[protein] + ATP = O-phospho-L-seryl-[protein] + ADP + H(+). It carries out the reaction L-threonyl-[protein] + ATP = O-phospho-L-threonyl-[protein] + ADP + H(+). Interacts with pak1/shk1 and coordinates cell morphogenesis with the cell cycle. It is essential for maintenance of cell polarity and is involved in mitotic control. The chain is Serine/threonine-protein kinase orb6 (orb6) from Schizosaccharomyces pombe (strain 972 / ATCC 24843) (Fission yeast).